The following is a 284-amino-acid chain: 4-diphosphocytidyl-2-C-methyl-D-erythritol kinase (284 aa).

Lys9 is a catalytic residue. Residue 90-100 participates in ATP binding; the sequence is PLVSGLGGDSS. Residue Asp132 is part of the active site.

This sequence belongs to the GHMP kinase family. IspE subfamily.

The catalysed reaction is 4-CDP-2-C-methyl-D-erythritol + ATP = 4-CDP-2-C-methyl-D-erythritol 2-phosphate + ADP + H(+). Its pathway is isoprenoid biosynthesis; isopentenyl diphosphate biosynthesis via DXP pathway; isopentenyl diphosphate from 1-deoxy-D-xylulose 5-phosphate: step 3/6. Catalyzes the phosphorylation of the position 2 hydroxy group of 4-diphosphocytidyl-2C-methyl-D-erythritol. This chain is 4-diphosphocytidyl-2-C-methyl-D-erythritol kinase, found in Dehalococcoides mccartyi (strain ATCC BAA-2266 / KCTC 15142 / 195) (Dehalococcoides ethenogenes (strain 195)).